We begin with the raw amino-acid sequence, 259 residues long: Deoxyribose-phosphate aldolase (259 aa).

The Proton donor/acceptor role is filled by Asp-102. Lys-167 (schiff-base intermediate with acetaldehyde) is an active-site residue. The Proton donor/acceptor role is filled by Lys-201.

Belongs to the DeoC/FbaB aldolase family. DeoC type 2 subfamily.

The protein resides in the cytoplasm. It carries out the reaction 2-deoxy-D-ribose 5-phosphate = D-glyceraldehyde 3-phosphate + acetaldehyde. It functions in the pathway carbohydrate degradation; 2-deoxy-D-ribose 1-phosphate degradation; D-glyceraldehyde 3-phosphate and acetaldehyde from 2-deoxy-alpha-D-ribose 1-phosphate: step 2/2. Functionally, catalyzes a reversible aldol reaction between acetaldehyde and D-glyceraldehyde 3-phosphate to generate 2-deoxy-D-ribose 5-phosphate. This Proteus mirabilis (strain HI4320) protein is Deoxyribose-phosphate aldolase.